The chain runs to 213 residues: AN1-type zinc finger protein 5 (213 aa).

The segment at 8-42 (TPGPMLCSTGCGFYGNPRTNGMCSVCYKEHLQRQQ) adopts an A20-type zinc-finger fold. 4 residues coordinate Zn(2+): C14, C18, C30, and C33. A disordered region spans residues 39–149 (QRQQNSGRMS…EEKAPELPKP (111 aa)). Over residues 40–75 (RQQNSGRMSPMGTASGSNSPTSDSASVQRADTSLNN) the composition is skewed to polar residues. A phosphoserine mark is found at S48 and S58. The segment covering 120 to 138 (SEPVVTQPSPSVSQPSTSQ) has biased composition (low complexity). Positions 139–148 (SEEKAPELPK) are enriched in basic and acidic residues. The AN1-type zinc finger occupies 148–194 (KPKKNRCFMCRKKVGLTGFDCRCGNLFCGLHRYSDKHNCPYDYKAEA). Residues C154, C157, C168, C170, C175, H178, H184, and C186 each coordinate Zn(2+). An N6-acetyllysine modification is found at K209.

As to quaternary structure, interacts with ubiquitin and polyubiquitinated proteins. Identified in a heterotrimeric complex with ubiquitin and SQSTM1, where ZFAND5 and SQSTM1 both interact with the same ubiquitin molecule. Homooligomer and/or heterooligomer. Interacts (via A20-type domain) with IKBKG and RIPK1 and with TRAF6 (via AN1-type domain). As to expression, highly expressed in skeletal muscle. Expressed in fetal cochlea. Also expressed in infant brain, fetal heart, pancreatic islet, melanocyte, pineal gland, placenta, corneal stroma, and parathyroid tumor. Weakly expressed or undetectable in adult brain, heart, colon, thymus, spleen, kidney, liver, small intestine, placenta, lung and peripheral blood leukocytes. Expressed in rhabdomyosarcoma RD cells (at protein level).

The protein resides in the cytoplasm. Involved in protein degradation via the ubiquitin-proteasome system. May act by anchoring ubiquitinated proteins to the proteasome. Plays a role in ubiquitin-mediated protein degradation during muscle atrophy. Plays a role in the regulation of NF-kappa-B activation and apoptosis. Inhibits NF-kappa-B activation triggered by overexpression of RIPK1 and TRAF6 but not of RELA. Also inhibits tumor necrosis factor (TNF), IL-1 and TLR4-induced NF-kappa-B activation in a dose-dependent manner. Overexpression sensitizes cells to TNF-induced apoptosis. Is a potent inhibitory factor for osteoclast differentiation. In Homo sapiens (Human), this protein is AN1-type zinc finger protein 5 (ZFAND5).